The following is a 244-amino-acid chain: 5-oxoprolinase subunit A (244 aa).

It belongs to the LamB/PxpA family. In terms of assembly, forms a complex composed of PxpA, PxpB and PxpC.

The enzyme catalyses 5-oxo-L-proline + ATP + 2 H2O = L-glutamate + ADP + phosphate + H(+). In terms of biological role, catalyzes the cleavage of 5-oxoproline to form L-glutamate coupled to the hydrolysis of ATP to ADP and inorganic phosphate. This Salmonella schwarzengrund (strain CVM19633) protein is 5-oxoprolinase subunit A.